A 177-amino-acid chain; its full sequence is Large ribosomal subunit protein uL10 (177 aa).

Belongs to the universal ribosomal protein uL10 family. As to quaternary structure, part of the ribosomal stalk of the 50S ribosomal subunit. The N-terminus interacts with L11 and the large rRNA to form the base of the stalk. The C-terminus forms an elongated spine to which L12 dimers bind in a sequential fashion forming a multimeric L10(L12)X complex.

Forms part of the ribosomal stalk, playing a central role in the interaction of the ribosome with GTP-bound translation factors. The protein is Large ribosomal subunit protein uL10 of Xanthomonas campestris pv. campestris (strain 8004).